Consider the following 758-residue polypeptide: MTTLHFSGFPRVGAFRELKFAQEKYWRKEISEQELLAVAKDLREKNWKHQAAANADYVAVGDFTFYDHILDLQVATGAIPARFGFDSQNLSLEQFFQLARGNKDQFAIEMTKWFDTNYHYLVPEFHADTEFKANAKHYVQQLQEAQALGLKAKPTVVGPLTFLWVGKEKGAVEFDRLSLLPKLLPVYVEILTALVEAGAEWIQIDEPALTVDLPKEWVEAYKDVYATLSKVSAKILLGTYFGSVAEHAALLKALPVDGLHIDLVRAPEQPDAFADYDKVLSVGVIDGRNIWRANLNKVLETVEPLQAKLGERLWISSSCSLLHTPFDLSVEEKLKANKPDLYSWLAFTLQKTQELRVLKAALNEGRDSVAEELAASQAAADSRANSSEIHRADVAKRLADLPANADQRKSPFVNRIKAQQAWLNLPLLPTTNIGSFPQTTEIRQARAAFKKGELSAADYEAAMKKEIALVVEEQEKLDLDVLVHGEAERNDMVEYFGELLSGFAFTQYGWVQSYGSRCVKPPIIFGDVSRPEAMTVAWSTYAQSLTKRPMKGMLTGPVTILQWSFVRNDIPRATVCKQIALALNDEVLDLEKAGIKVIQIDEPAIREGLPLKRADWDAYLNWAGESFRLSSAGCEDSTQIHTHMCYSEFNDILPAIAAMDADVITIETSRSDMELLTAFGKFKYPNDIGPGVYDIHSPRVPTEAEVEHLLRKAIEVVPVERLWVNPDCGLKTRGWKETLEQLQVMMNVTRKLRAELAK.

5-methyltetrahydropteroyltri-L-glutamate contacts are provided by residues 16–19 and Lys112; that span reads RELK. L-homocysteine-binding positions include 433–435 and Glu486; that span reads IGS. L-methionine-binding positions include 433-435 and Glu486; that span reads IGS. 5-methyltetrahydropteroyltri-L-glutamate contacts are provided by residues 517 to 518 and Trp563; that span reads RC. Asp601 contacts L-homocysteine. Asp601 lines the L-methionine pocket. Glu607 serves as a coordination point for 5-methyltetrahydropteroyltri-L-glutamate. Residues His643, Cys645, and Glu667 each coordinate Zn(2+). The Proton donor role is filled by His696. Position 728 (Cys728) interacts with Zn(2+).

Belongs to the vitamin-B12 independent methionine synthase family. The cofactor is Zn(2+).

The catalysed reaction is 5-methyltetrahydropteroyltri-L-glutamate + L-homocysteine = tetrahydropteroyltri-L-glutamate + L-methionine. It functions in the pathway amino-acid biosynthesis; L-methionine biosynthesis via de novo pathway; L-methionine from L-homocysteine (MetE route): step 1/1. Its function is as follows. Catalyzes the transfer of a methyl group from 5-methyltetrahydrofolate to homocysteine resulting in methionine formation. The protein is 5-methyltetrahydropteroyltriglutamate--homocysteine methyltransferase of Neisseria meningitidis serogroup C (strain 053442).